The following is a 119-amino-acid chain: Fluoride-specific ion channel FluC (119 aa).

The next 3 membrane-spanning stretches (helical) occupy residues 37-54 (LFANWTGALLIGIFAETV), 61-83 (LLLITGFLGSLTTLSGFSLETVT), and 93-112 (ALSNIFLHTAGSLLLTWLGL). Na(+)-binding residues include Gly69 and Thr72.

The protein belongs to the fluoride channel Fluc/FEX (TC 1.A.43) family.

The protein resides in the cell inner membrane. The enzyme catalyses fluoride(in) = fluoride(out). Na(+) is not transported, but it plays an essential structural role and its presence is essential for fluoride channel function. Its function is as follows. Fluoride-specific ion channel. Important for reducing fluoride concentration in the cell, thus reducing its toxicity. The protein is Fluoride-specific ion channel FluC of Neisseria meningitidis serogroup C (strain 053442).